An 876-amino-acid chain; its full sequence is Leucine--tRNA ligase (876 aa).

The 'HIGH' region motif lies at proline 43–histidine 53. The 'KMSKS' region signature appears at lysine 632–serine 636. Lysine 635 serves as a coordination point for ATP.

The protein belongs to the class-I aminoacyl-tRNA synthetase family.

Its subcellular location is the cytoplasm. It catalyses the reaction tRNA(Leu) + L-leucine + ATP = L-leucyl-tRNA(Leu) + AMP + diphosphate. The polypeptide is Leucine--tRNA ligase (Rhodopseudomonas palustris (strain TIE-1)).